We begin with the raw amino-acid sequence, 202 residues long: Orotate phosphoribosyltransferase (202 aa).

Residues Lys93 and 113–121 (EDIITTGGS) contribute to the 5-phospho-alpha-D-ribose 1-diphosphate site. Orotate contacts are provided by Thr117 and Arg145.

Belongs to the purine/pyrimidine phosphoribosyltransferase family. PyrE subfamily. In terms of assembly, homodimer. The cofactor is Mg(2+).

It catalyses the reaction orotidine 5'-phosphate + diphosphate = orotate + 5-phospho-alpha-D-ribose 1-diphosphate. It functions in the pathway pyrimidine metabolism; UMP biosynthesis via de novo pathway; UMP from orotate: step 1/2. Functionally, catalyzes the transfer of a ribosyl phosphate group from 5-phosphoribose 1-diphosphate to orotate, leading to the formation of orotidine monophosphate (OMP). The protein is Orotate phosphoribosyltransferase of Campylobacter jejuni subsp. doylei (strain ATCC BAA-1458 / RM4099 / 269.97).